The primary structure comprises 91 residues: Putative regulatory protein Helmi_20580 (91 aa).

It belongs to the RemA family.

The protein is Putative regulatory protein Helmi_20580 of Heliobacterium modesticaldum (strain ATCC 51547 / Ice1).